The sequence spans 663 residues: Methionine--tRNA ligase (663 aa).

Residues 10-20 (AYTNGPLHLGH) carry the 'HIGH' region motif. 4 residues coordinate Zn(2+): cysteine 142, cysteine 145, cysteine 154, and cysteine 157. A 'KMSKS' region motif is present at residues 323–327 (KMSTS). Threonine 326 provides a ligand contact to ATP. The region spanning 563–663 (YFTKVDLRVG…REISLGSKIH (101 aa)) is the tRNA-binding domain.

Belongs to the class-I aminoacyl-tRNA synthetase family. MetG type 1 subfamily. As to quaternary structure, homodimer. Requires Zn(2+) as cofactor.

The protein localises to the cytoplasm. It carries out the reaction tRNA(Met) + L-methionine + ATP = L-methionyl-tRNA(Met) + AMP + diphosphate. Its function is as follows. Is required not only for elongation of protein synthesis but also for the initiation of all mRNA translation through initiator tRNA(fMet) aminoacylation. The sequence is that of Methionine--tRNA ligase from Methanococcus vannielii (strain ATCC 35089 / DSM 1224 / JCM 13029 / OCM 148 / SB).